A 105-amino-acid chain; its full sequence is Small ribosomal subunit protein uS10 (105 aa).

Belongs to the universal ribosomal protein uS10 family. In terms of assembly, part of the 30S ribosomal subunit.

Its function is as follows. Involved in the binding of tRNA to the ribosomes. The chain is Small ribosomal subunit protein uS10 from Maridesulfovibrio salexigens (strain ATCC 14822 / DSM 2638 / NCIMB 8403 / VKM B-1763) (Desulfovibrio salexigens).